The sequence spans 217 residues: Redox-sensing transcriptional repressor Rex (217 aa).

Positions 17–56 (RYLRYVEDLLNHDVLRISSSELSQRMGYTASQVRQDFNNF) form a DNA-binding region, H-T-H motif. 91-96 (GVGNLG) lines the NAD(+) pocket.

It belongs to the transcriptional regulatory Rex family. In terms of assembly, homodimer.

It localises to the cytoplasm. Functionally, modulates transcription in response to changes in cellular NADH/NAD(+) redox state. The protein is Redox-sensing transcriptional repressor Rex of Caldicellulosiruptor bescii (strain ATCC BAA-1888 / DSM 6725 / KCTC 15123 / Z-1320) (Anaerocellum thermophilum).